Consider the following 335-residue polypeptide: Mitochondrial amidoxime reducing component 2 (335 aa).

Residues 1–35 (MGASSSSALARLGLPAQARPRWLGVAVLGLAAVAL) constitute a mitochondrion transit peptide. Residues Lys-59, Lys-138, and Lys-144 each participate in a glycyl lysine isopeptide (Lys-Gly) (interchain with G-Cter in ubiquitin) cross-link. Lys-156 is modified (N6-acetyllysine; alternate). Lys-156 is covalently cross-linked (Glycyl lysine isopeptide (Lys-Gly) (interchain with G-Cter in ubiquitin); alternate). Glycyl lysine isopeptide (Lys-Gly) (interchain with G-Cter in ubiquitin) cross-links involve residues Lys-173, Lys-187, Lys-287, and Lys-294. The MOSC domain occupies 188 to 334 (GRTSRKLLPT…LRVGDPVYRM (147 aa)).

Component of a complex composed of cytochrome b5, NADH-cytochrome b5 reductase (CYB5R3) and MTARC2. It depends on Mo-molybdopterin as a cofactor. In terms of processing, ubiquitinated by PRKN during mitophagy, leading to its degradation and enhancement of mitophagy. Deubiquitinated by USP30.

It localises to the mitochondrion outer membrane. The protein localises to the peroxisome. The enzyme catalyses N(omega)-hydroxy-L-arginine + 2 Fe(II)-[cytochrome b5] + 2 H(+) = L-arginine + 2 Fe(III)-[cytochrome b5] + H2O. Functionally, catalyzes the reduction of N-oxygenated molecules, acting as a counterpart of cytochrome P450 and flavin-containing monooxygenases in metabolic cycles. As a component of prodrug-converting system, reduces a multitude of N-hydroxylated prodrugs particularly amidoximes, leading to increased drug bioavailability. May be involved in mitochondrial N(omega)-hydroxy-L-arginine (NOHA) reduction, regulating endogenous nitric oxide levels and biosynthesis. Postulated to cleave the N-OH bond of N-hydroxylated substrates in concert with electron transfer from NADH to cytochrome b5 reductase then to cytochrome b5, the ultimate electron donor that primes the active site for substrate reduction. The polypeptide is Mitochondrial amidoxime reducing component 2 (MTARC2) (Macaca fascicularis (Crab-eating macaque)).